The chain runs to 287 residues: Protease HtpX (287 aa).

The next 2 helical transmembrane spans lie at 4–24 and 33–53; these read IFLL…VMSI and SGLL…SLAI. His-139 serves as a coordination point for Zn(2+). Glu-140 is an active-site residue. Residue His-143 coordinates Zn(2+). Helical transmembrane passes span 154 to 174 and 195 to 215; these read LIQG…AGII and AVVF…VAYF. Glu-220 is a binding site for Zn(2+).

The protein belongs to the peptidase M48B family. The cofactor is Zn(2+).

It is found in the cell inner membrane. The protein is Protease HtpX of Shewanella piezotolerans (strain WP3 / JCM 13877).